The primary structure comprises 72 residues: Crustacean hyperglycemic hormone (72 aa).

Gln1 carries the pyrrolidone carboxylic acid modification. The residue at position 3 (Phe3) is a D-phenylalanine. Intrachain disulfides connect Cys7–Cys43, Cys23–Cys39, and Cys26–Cys52. Val72 carries the post-translational modification Valine amide.

In terms of tissue distribution, produced by the medulla terminalis X-organ in the eyestalks and transported to the sinus gland where they are stored and released.

The protein resides in the secreted. Hormone found in the sinus gland of isopods and decapods which controls the blood sugar level. Has a secretagogue action over the amylase released from the midgut gland. May act as a stress hormone and may be involved in the control of molting and reproduction. This is Crustacean hyperglycemic hormone from Astacus astacus (Noble crayfish).